The chain runs to 386 residues: Galactokinase (386 aa).

Residue Glu-35–Asp-38 participates in substrate binding. ATP is bound by residues Ser-69 and Gly-125–Ser-131. Mg(2+)-binding residues include Ser-131 and Glu-163. The Proton acceptor role is filled by Asp-175. Tyr-224 provides a ligand contact to substrate.

This sequence belongs to the GHMP kinase family. GalK subfamily.

The protein resides in the cytoplasm. The catalysed reaction is alpha-D-galactose + ATP = alpha-D-galactose 1-phosphate + ADP + H(+). Its pathway is carbohydrate metabolism; galactose metabolism. In terms of biological role, catalyzes the transfer of the gamma-phosphate of ATP to D-galactose to form alpha-D-galactose-1-phosphate (Gal-1-P). The polypeptide is Galactokinase (Vibrio vulnificus (strain CMCP6)).